Here is a 349-residue protein sequence, read N- to C-terminus: Hydroxymethylglutaryl-CoA synthase (349 aa).

Residues aspartate 29 and alanine 30 each coordinate (3S)-3-hydroxy-3-methylglutaryl-CoA. The active-site Proton donor/acceptor is glutamate 81. (3S)-3-hydroxy-3-methylglutaryl-CoA contacts are provided by cysteine 113 and threonine 154. The active-site Acyl-thioester intermediate is the cysteine 113. Arginine 202 serves as a coordination point for CoA. The (3S)-3-hydroxy-3-methylglutaryl-CoA site is built by threonine 204 and histidine 237. Catalysis depends on histidine 237, which acts as the Proton donor/acceptor. CoA is bound at residue lysine 242. Residues lysine 246, asparagine 269, and serine 299 each coordinate (3S)-3-hydroxy-3-methylglutaryl-CoA.

This sequence belongs to the thiolase-like superfamily. Archaeal HMG-CoA synthase family. As to quaternary structure, interacts with acetoacetyl-CoA thiolase that catalyzes the precedent step in the pathway and with a DUF35 protein. The acetoacetyl-CoA thiolase/HMG-CoA synthase complex channels the intermediate via a fused CoA-binding site, which allows for efficient coupling of the endergonic thiolase reaction with the exergonic HMGCS reaction.

It catalyses the reaction acetoacetyl-CoA + acetyl-CoA + H2O = (3S)-3-hydroxy-3-methylglutaryl-CoA + CoA + H(+). It participates in metabolic intermediate biosynthesis; (R)-mevalonate biosynthesis; (R)-mevalonate from acetyl-CoA: step 2/3. Catalyzes the condensation of acetyl-CoA with acetoacetyl-CoA to form 3-hydroxy-3-methylglutaryl-CoA (HMG-CoA). Functions in the mevalonate (MVA) pathway leading to isopentenyl diphosphate (IPP), a key precursor for the biosynthesis of isoprenoid compounds that are building blocks of archaeal membrane lipids. This Methanosarcina acetivorans (strain ATCC 35395 / DSM 2834 / JCM 12185 / C2A) protein is Hydroxymethylglutaryl-CoA synthase.